A 720-amino-acid polypeptide reads, in one-letter code: Polyribonucleotide nucleotidyltransferase (720 aa).

Residues Asp484 and Asp490 each coordinate Mg(2+). In terms of domain architecture, KH spans 551-610 (PRMYKINIDPSKIGSVIGSGGKTIRSIIEQTNTTVDIENDGTVVIGATDEASAKKAIKII). An S1 motif domain is found at 620–688 (GSIYTGKVTR…NQGRVNLSHR (69 aa)). The tract at residues 697-720 (PISRNRDSQPRRPGPFRPSDRSNS) is disordered.

Belongs to the polyribonucleotide nucleotidyltransferase family. It depends on Mg(2+) as a cofactor.

It is found in the cytoplasm. The catalysed reaction is RNA(n+1) + phosphate = RNA(n) + a ribonucleoside 5'-diphosphate. Functionally, involved in mRNA degradation. Catalyzes the phosphorolysis of single-stranded polyribonucleotides processively in the 3'- to 5'-direction. The polypeptide is Polyribonucleotide nucleotidyltransferase (Dehalococcoides mccartyi (strain CBDB1)).